The sequence spans 547 residues: Flagellar hook-associated protein 1 (547 aa).

Belongs to the flagella basal body rod proteins family.

It localises to the secreted. It is found in the bacterial flagellum. The protein is Flagellar hook-associated protein 1 (flgK) of Escherichia coli (strain K12).